Reading from the N-terminus, the 494-residue chain is Catalase A (494 aa).

Over residues 1–23 the composition is skewed to polar residues; sequence MTDRPTITTTAGAPVPDNQNSLT. The interval 1 to 25 is disordered; the sequence is MTDRPTITTTAGAPVPDNQNSLTAG. Active-site residues include His-55 and Asn-127. Residue Tyr-337 participates in heme binding.

It belongs to the catalase family. It depends on heme as a cofactor.

It is found in the periplasm. The enzyme catalyses 2 H2O2 = O2 + 2 H2O. Its function is as follows. Decomposes hydrogen peroxide into water and oxygen; serves to protect cells from the toxic effects of hydrogen peroxide. This chain is Catalase A (katA), found in Rhizobium meliloti (strain 1021) (Ensifer meliloti).